Consider the following 133-residue polypeptide: Protransforming growth factor alpha (133 aa).

An N-terminal signal peptide occupies residues 1-23; that stretch reads MVPSAGQLALFALGIFLAVCQAL. A propeptide spans 24-38 (removed in mature form); that stretch reads ENSTSALSDPPVAAA. The Extracellular segment spans residues 24–97; that stretch reads ENSTSALSDP…AVVAASQKKQ (74 aa). Asn25 is a glycosylation site (N-linked (GlcNAc...) asparagine). Residues 42-82 enclose the EGF-like domain; that stretch reads HFNDCPDSHTQFCFHGTCRFLLQEEKPACVCHSGYVGARCE. 3 cysteine pairs are disulfide-bonded: Cys46-Cys59, Cys54-Cys70, and Cys72-Cys81. Residues 89–133 constitute a propeptide, removed in mature form; sequence VVAASQKKQAITALVVVTIVALAVLIITCVLIHCCEVRKHSVVVP. A helical membrane pass occupies residues 98-120; sequence AITALVVVTIVALAVLIITCVLI. Over 121-133 the chain is Cytoplasmic; that stretch reads HCCEVRKHSVVVP.

Interacts with the PDZ domains of MAGI3, SDCBP and SNTA1. The interaction with SDCBP, is required for the targeting to the cell surface. In the endoplasmic reticulum, in its immature form (i.e. with a prosegment and lacking full N-glycosylation), interacts with CNIH. In the Golgi apparatus, may form a complex with CNIH and GORASP2. Interacts (via cytoplasmic C-terminal domain) with NKD2. In terms of tissue distribution, skin.

It is found in the secreted. It localises to the extracellular space. The protein resides in the cell membrane. Functionally, TGF alpha is a mitogenic polypeptide that is able to bind to the EGF receptor/EGFR and to act synergistically with TGF beta to promote anchorage-independent cell proliferation in soft agar. The sequence is that of Protransforming growth factor alpha (TGFA) from Ovis aries (Sheep).